We begin with the raw amino-acid sequence, 428 residues long: Adenylosuccinate synthetase 1 (428 aa).

Residues 12-18 and 40-42 each bind GTP; these read GDEGKGK and GHT. Aspartate 13 acts as the Proton acceptor in catalysis. Aspartate 13 and glycine 40 together coordinate Mg(2+). IMP is bound by residues 13-16, 38-41, threonine 133, arginine 147, asparagine 224, threonine 239, and arginine 303; these read DEGK and NAGH. Histidine 41 acts as the Proton donor in catalysis. Substrate is bound at residue 299–305; it reads TTTGRRR. Residues arginine 305, 331–333, and 413–415 contribute to the GTP site; these read KLD and GVG.

It belongs to the adenylosuccinate synthetase family. As to quaternary structure, homodimer. Requires Mg(2+) as cofactor.

It is found in the cytoplasm. The catalysed reaction is IMP + L-aspartate + GTP = N(6)-(1,2-dicarboxyethyl)-AMP + GDP + phosphate + 2 H(+). Its pathway is purine metabolism; AMP biosynthesis via de novo pathway; AMP from IMP: step 1/2. Plays an important role in the de novo pathway and in the salvage pathway of purine nucleotide biosynthesis. Catalyzes the first committed step in the biosynthesis of AMP from IMP. The protein is Adenylosuccinate synthetase 1 of Laccaria bicolor (strain S238N-H82 / ATCC MYA-4686) (Bicoloured deceiver).